Consider the following 271-residue polypeptide: Probable WRKY transcription factor 69 (271 aa).

Disordered regions lie at residues Met1–Lys47 and Pro130–Ala166. Residues Glu9–Tyr18 are compositionally biased toward acidic residues. A DNA-binding region (WRKY) is located at residues Gly64–Pro130.

Belongs to the WRKY group II-e family.

The protein resides in the nucleus. Functionally, transcription factor. Interacts specifically with the W box (5'-(T)TGAC[CT]-3'), a frequently occurring elicitor-responsive cis-acting element. The sequence is that of Probable WRKY transcription factor 69 (WRKY69) from Arabidopsis thaliana (Mouse-ear cress).